The following is a 90-amino-acid chain: Putative ATPase inhibitor, mitochondrial (90 aa).

Residues 42–89 (ESREKAKEDFFVHQHEIEQLRKLKESLKLHREELDELESRVDKKMKSN) adopt a coiled-coil conformation.

Belongs to the ATPase inhibitor family.

The protein resides in the mitochondrion. Functionally, forms a one-to-one complex with ATPase to inhibit the enzyme activity completely. In Schizosaccharomyces pombe (strain 972 / ATCC 24843) (Fission yeast), this protein is Putative ATPase inhibitor, mitochondrial (inh1).